The sequence spans 301 residues: Putative two-component membrane permease complex subunit SMU_747c (301 aa).

A run of 8 helical transmembrane segments spans residues 15–35 (LAIF…GAIL), 60–80 (ILFG…IVPI), 97–117 (FLAT…SAFG), 124–144 (FLRL…LGFI), 188–208 (YLIF…TRIL), 211–231 (IGHN…ILSL), 238–258 (FIGT…FLLI), and 278–298 (FILQ…LIVG).

Belongs to the UPF0718 family. As to quaternary structure, interacts with SMU_746c.

It is found in the cell membrane. Its function is as follows. Could be part of a two-component membrane permease system responsible for amino acid transport under low pH. Involved in acidogenesis, biofilm formation and low-pH survival. The protein is Putative two-component membrane permease complex subunit SMU_747c of Streptococcus mutans serotype c (strain ATCC 700610 / UA159).